The sequence spans 881 residues: Valine--tRNA ligase (881 aa).

Positions 49 to 59 match the 'HIGH' region motif; that stretch reads PNVTGKLHLGH. The 'KMSKS' region motif lies at 526–530; the sequence is KMSKS. K529 is an ATP binding site. Residues 810–881 adopt a coiled-coil conformation; that stretch reads LADLINLDEE…VRQRLADLEK (72 aa).

This sequence belongs to the class-I aminoacyl-tRNA synthetase family. ValS type 1 subfamily. Monomer.

Its subcellular location is the cytoplasm. The enzyme catalyses tRNA(Val) + L-valine + ATP = L-valyl-tRNA(Val) + AMP + diphosphate. Its function is as follows. Catalyzes the attachment of valine to tRNA(Val). As ValRS can inadvertently accommodate and process structurally similar amino acids such as threonine, to avoid such errors, it has a 'posttransfer' editing activity that hydrolyzes mischarged Thr-tRNA(Val) in a tRNA-dependent manner. The chain is Valine--tRNA ligase from Bacillus thuringiensis subsp. konkukian (strain 97-27).